The following is a 115-amino-acid chain: DNA-binding protein PYRAB09250 (115 aa).

Belongs to the PDCD5 family.

This Pyrococcus abyssi (strain GE5 / Orsay) protein is DNA-binding protein PYRAB09250.